Here is a 120-residue protein sequence, read N- to C-terminus: Cu-Zn superoxide dismutase-like protein OPG175 (120 aa).

Cys-52 and Cys-102 are oxidised to a cystine.

The protein belongs to the Cu-Zn superoxide dismutase family.

It is found in the virion. Its subcellular location is the host cytoplasm. Superoxide dismutase-like protein with no enzymatic activity. This chain is Cu-Zn superoxide dismutase-like protein OPG175 (OPG175), found in Vaccinia virus (strain Tashkent) (VACV).